A 394-amino-acid chain; its full sequence is Protein NDRG1 (394 aa).

The residue at position 2 (S2) is an N-acetylserine. Phosphoserine occurs at positions 2, 319, and 326. Residues 325–394 (RSRTASGSSV…AGPKSMEVSC (70 aa)) are disordered. Positions 327–339 (RTASGSSVTSLDG) are enriched in polar residues. T328 carries the post-translational modification Phosphothreonine; by SGK1. S330 and S332 each carry phosphoserine; by SGK1. S333 carries the phosphoserine modification. A Phosphothreonine modification is found at T335. S336 bears the Phosphoserine mark. A run of 3 repeats spans residues 339 to 348 (GTRSRSHTSE), 349 to 358 (GTRSRSHTSE), and 359 to 368 (GTRSRSHTSE). The tract at residues 339-368 (GTRSRSHTSEGTRSRSHTSEGTRSRSHTSE) is 3 X 10 AA tandem repeats of G-[PST]-R-S-R-S-H-T-S-E. T340 is subject to Phosphothreonine. Position 342 is a phosphoserine (S342). Basic and acidic residues predominate over residues 345 to 371 (HTSEGTRSRSHTSEGTRSRSHTSEGAH). T346 carries the post-translational modification Phosphothreonine; by SGK1. Residue S352 is modified to Phosphoserine. The residue at position 356 (T356) is a Phosphothreonine; by SGK1. Phosphoserine occurs at positions 362 and 364. Phosphothreonine occurs at positions 366 and 375.

Belongs to the NDRG family. In terms of assembly, interacts with RAB4A (membrane-bound form); the interaction involves NDRG1 in vesicular recycling ofCDH1. Interacts with APOA1, APOA2, PRA1 and RTN1. Post-translationally, under stress conditions, phosphorylated in the C-terminal on many serine and threonine residues. Phosphorylated in vitro by PKA. Phosphorylation enhanced by increased intracellular cAMP levels. Homocysteine induces dephosphorylation. Phosphorylation by SGK1 is cell cycle dependent.

The protein resides in the cytoplasm. The protein localises to the cytosol. It is found in the cytoskeleton. It localises to the microtubule organizing center. Its subcellular location is the centrosome. The protein resides in the nucleus. The protein localises to the cell membrane. Its function is as follows. Stress-responsive protein involved in hormone responses, cell growth, and differentiation. Acts as a tumor suppressor in many cell types. Necessary but not sufficient for p53/TP53-mediated caspase activation and apoptosis. Has a role in cell trafficking notably of the Schwann cell and is necessary for the maintenance and development of the peripheral nerve myelin sheath. Required for vesicular recycling of CDH1 and TF. May also function in lipid trafficking. Protects cells from spindle disruption damage. Functions in p53/TP53-dependent mitotic spindle checkpoint. Regulates microtubule dynamics and maintains euploidy. This chain is Protein NDRG1 (Ndrg1), found in Macaca fascicularis (Crab-eating macaque).